A 200-amino-acid chain; its full sequence is MSKFLQQKPIILASSSTIRHKLMKSLGLDFLVVPSNCNEEEIKTRHNSVELVELGITLAKIKALDVSQHYPEHYIIAADQLCVADKRVFNKPLNHQTAVSHLRELSGKQHQQIACLCIVKESKILWQYHETATLTLHHLSEKTIEAYLQAEKPYQSCGAYQYEGLGKWLFKEVQGSEDTILGLPLMPLVNALVNLKVVGI.

The active-site Proton acceptor is Asp-79.

This sequence belongs to the Maf family. It depends on a divalent metal cation as a cofactor.

Its subcellular location is the cytoplasm. It catalyses the reaction a ribonucleoside 5'-triphosphate + H2O = a ribonucleoside 5'-phosphate + diphosphate + H(+). The catalysed reaction is a 2'-deoxyribonucleoside 5'-triphosphate + H2O = a 2'-deoxyribonucleoside 5'-phosphate + diphosphate + H(+). Functionally, nucleoside triphosphate pyrophosphatase. May have a dual role in cell division arrest and in preventing the incorporation of modified nucleotides into cellular nucleic acids. This Legionella pneumophila subsp. pneumophila (strain Philadelphia 1 / ATCC 33152 / DSM 7513) protein is Nucleoside triphosphate pyrophosphatase.